The following is a 213-amino-acid chain: Imidazole glycerol phosphate synthase subunit HisH 1 (213 aa).

One can recognise a Glutamine amidotransferase type-1 domain in the interval 4–213 (TVAVIDYGMG…QNFVAWDGRW (210 aa)). The active-site Nucleophile is the Cys-82. Residues His-191 and Glu-193 contribute to the active site.

In terms of assembly, heterodimer of HisH and HisF.

It is found in the cytoplasm. It carries out the reaction 5-[(5-phospho-1-deoxy-D-ribulos-1-ylimino)methylamino]-1-(5-phospho-beta-D-ribosyl)imidazole-4-carboxamide + L-glutamine = D-erythro-1-(imidazol-4-yl)glycerol 3-phosphate + 5-amino-1-(5-phospho-beta-D-ribosyl)imidazole-4-carboxamide + L-glutamate + H(+). It catalyses the reaction L-glutamine + H2O = L-glutamate + NH4(+). It participates in amino-acid biosynthesis; L-histidine biosynthesis; L-histidine from 5-phospho-alpha-D-ribose 1-diphosphate: step 5/9. In terms of biological role, IGPS catalyzes the conversion of PRFAR and glutamine to IGP, AICAR and glutamate. The HisH subunit provides the glutamine amidotransferase activity that produces the ammonia necessary to HisF for the synthesis of IGP and AICAR. This Pseudomonas aeruginosa (strain ATCC 15692 / DSM 22644 / CIP 104116 / JCM 14847 / LMG 12228 / 1C / PRS 101 / PAO1) protein is Imidazole glycerol phosphate synthase subunit HisH 1 (hisH1).